Consider the following 446-residue polypeptide: tRNA modification GTPase MnmE (446 aa).

The (6S)-5-formyl-5,6,7,8-tetrahydrofolate site is built by arginine 24, glutamate 81, and lysine 120. The TrmE-type G domain occupies 216–368; that stretch reads GLHAVLIGPP…LHIRLRELAL (153 aa). Asparagine 226 contributes to the K(+) binding site. Residues 226–231, 245–251, and 270–273 each bind GTP; these read NAGKSS, TDVAGTT, and DTAG. A Mg(2+)-binding site is contributed by serine 230. K(+)-binding residues include threonine 245, valine 247, and threonine 250. Threonine 251 lines the Mg(2+) pocket. (6S)-5-formyl-5,6,7,8-tetrahydrofolate is bound at residue lysine 446.

This sequence belongs to the TRAFAC class TrmE-Era-EngA-EngB-Septin-like GTPase superfamily. TrmE GTPase family. Homodimer. Heterotetramer of two MnmE and two MnmG subunits. It depends on K(+) as a cofactor.

It localises to the cytoplasm. Functionally, exhibits a very high intrinsic GTPase hydrolysis rate. Involved in the addition of a carboxymethylaminomethyl (cmnm) group at the wobble position (U34) of certain tRNAs, forming tRNA-cmnm(5)s(2)U34. The chain is tRNA modification GTPase MnmE from Xanthomonas oryzae pv. oryzae (strain MAFF 311018).